The sequence spans 389 residues: Basigin (389 aa).

Positions 1 to 21 are cleaved as a signal peptide; it reads MAAALLLALAFTLLSGQGACA. Residues 22–325 are Extracellular-facing; sequence AAGFLKAPLS…ETISLRVRSR (304 aa). An Ig-like domain is found at 37–120; that stretch reads GGSVVLHCEA…SSDPDRNHLT (84 aa). Disulfide bonds link Cys-44–Cys-108, Cys-157–Cys-203, and Cys-242–Cys-305. The 82-residue stretch at 138-219 folds into the Ig-like C2-type domain; that stretch reads EPGTIQTSVQ…VGRSEINVEG (82 aa). Residues Asn-160, Asn-270, and Asn-306 are each glycosylated (N-linked (GlcNAc...) asparagine). In terms of domain architecture, Ig-like V-type spans 221–319; sequence PRIKVGKKSE…AQGTTRETIS (99 aa). The chain crosses the membrane as a helical span at residues 326–349; that stretch reads MAALWPFLGIVAEVLVLVTIIFIY. Residues 350-389 lie on the Cytoplasmic side of the membrane; it reads EKRRKPDQTLDEDDPGAAPLKGSGTHMNDKDKNVRQRNAT. A disordered region spans residues 356-389; it reads DQTLDEDDPGAAPLKGSGTHMNDKDKNVRQRNAT. A Phosphothreonine modification is found at Thr-358. The residue at position 372 (Ser-372) is a Phosphoserine.

As to quaternary structure, interacts with NXNL1. Interacts with SLC2A1 and SLC16A1/GLUT1. Interacts with XKR8; promoting its localization at the cell membrane. Interacts with ATP1B2, MAG and L1CAM. Interacts with SLC16A7. Interacts with VEGFA, KDR/VEGFR2, PPIA/CYPA, SLC1A3, SLC16A11 and SLC16A12. Interacts with PPIL2; regulates BSG transport to the cell membrane. Interacts with SLC16A1; interaction mediates SLC16A1 targeting to the plasma membrane. Interacts with SLC16A3; interaction mediates SLC16A3 targeting to the plasma membrane. In terms of assembly, interacts with SLC16A6; this interaction mediates targeting to the plasma membrane. In terms of processing, N-glycosylated. Post-translationally, N-glycosylated. During spermatogenesis, probably deglycosylated during epididymal transit. In terms of tissue distribution, retina-specific. Expressed in both rods and cones (at protein level). Testis and caput, corpus and cauda epididymides (at protein level). Expressed in the brain, lung, liver, kidney, heart, spleen, uterus, retina and skeletal muscle.

The protein localises to the cell membrane. The protein resides in the photoreceptor inner segment. It is found in the cell projection. Its subcellular location is the cilium. It localises to the photoreceptor outer segment. The protein localises to the endoplasmic reticulum membrane. The protein resides in the basolateral cell membrane. Essential for normal retinal maturation and development. Acts as a retinal cell surface receptor for NXNL1 and plays an important role in NXNL1-mediated survival of retinal cone photoreceptors. In association with glucose transporter SLC16A1/GLUT1 and NXNL1, promotes retinal cone survival by enhancing aerobic glycolysis and accelerating the entry of glucose into photoreceptors. Functionally, signaling receptor for cyclophilins, essential for PPIA/CYPA and PPIB/CYPB-dependent signaling related to chemotaxis and adhesion of immune cells. Plays an important role in targeting the monocarboxylate transporters SLC16A1, SLC16A3 and SLC16A8 to the plasma membrane. Acts as a coreceptor for vascular endothelial growth factor receptor 2 (KDR/VEGFR2) in endothelial cells enhancing its VEGFA-mediated activation and downstream signaling. Promotes angiogenesis through EPAS1/HIF2A-mediated up-regulation of VEGFA and KDR/VEGFR2 in endothelial cells. Plays an important role in spermatogenesis; mediates interactions between germ cells and Sertoli cell and is essential for the development/differentiation of germ cells to round spermatids. The chain is Basigin (Bsg) from Mus musculus (Mouse).